Consider the following 344-residue polypeptide: Trace amine-associated receptor 8b (344 aa).

At 1–31 (MTSNFSQPALQLCYENTNGSCIKTPYSPGPR) the chain is on the extracellular side. 2 N-linked (GlcNAc...) asparagine glycosylation sites follow: N4 and N18. Intrachain disulfides connect C21–C185 and C104–C189. The chain crosses the membrane as a helical span at residues 32–52 (VILYMVFGFGAVLAVCGNLLV). Residues 53–67 (VISVLHFKQLHSPAN) lie on the Cytoplasmic side of the membrane. The chain crosses the membrane as a helical span at residues 68–88 (FLIASLASADFLVGISVMPFS). At 89–111 (MVRSIESCWYFGDAFCSLHSCCD) the chain is on the extracellular side. The helical transmembrane segment at 112–132 (VAFCYSSALHLCFISVDRYIA) threads the bilayer. Residues 133–146 (VTDPLVYPTKFTVS) are Cytoplasmic-facing. The chain crosses the membrane as a helical span at residues 147–167 (VSGICISISWILPLVYSSAVF). Over 168–195 (YTGISAKGIESLVSALNCVGGCQIVVNQ) the chain is Extracellular. The chain crosses the membrane as a helical span at residues 196-216 (DWVLIDFLLFFIPTLVMIILY). At 217–260 (SKIFLVAKQQAVKIETSVSDNRGESSSESHKARVAKRERKAAKT) the chain is on the cytoplasmic side. The helical transmembrane segment at 261-281 (LGVTVVAFMVSWLPYTIDSLV) threads the bilayer. Residue D282 is a topological domain, extracellular. The helical transmembrane segment at 283–303 (AFVGFITPAYVYEICCWSAYY) threads the bilayer. The Cytoplasmic segment spans residues 304–344 (NSAMNPLIYAFFYPWFRKAIKLILSGEILKSHSSTMSLFSE).

This sequence belongs to the G-protein coupled receptor 1 family. Specifically expressed in neurons of the olfactory epithelium.

It is found in the cell membrane. Its function is as follows. Olfactory receptor specific for trace amines. Trace amine compounds are enriched in animal body fluids and act on trace amine-associated receptors (TAARs) to elicit both intraspecific and interspecific innate behaviors. Ligand-binding causes a conformation change that triggers signaling via G alpha proteins, possibly G(i)/G(o) G alpha proteins. The chain is Trace amine-associated receptor 8b from Mus musculus (Mouse).